Consider the following 385-residue polypeptide: 2-oxoglutarate-dependent dioxygenase AFUA_1G01000 (385 aa).

The Fe2OG dioxygenase domain maps to 203 to 327; it reads PSDDFLRLLR…RYSVLVGTRP (125 aa). 3 residues coordinate Fe cation: H230, D232, and H304. Position 318 (R318) interacts with 2-oxoglutarate.

Belongs to the iron/ascorbate-dependent oxidoreductase family. The cofactor is Fe(2+).

In terms of biological role, 2-oxoglutarate-dependent dioxygenase; part of the gene cluster that mediates the biosynthesis of fumigermin that inhibits germination of spores of the inducing S.rapamycinicus, and thus helps the fungus to defend resources in the shared habitat against a bacterial competitor. The partially reducing polyketide synthase fngA alone is sufficient for the production of fumigermin. FgnA catalyzes the condensation of 3 malonyl-CoA units to an acetyl-CoA starter, and 3 methylations to yield fumigermin. It is remarkable that the five cluster genes including fgnA are conserved in distantly related fungi, supporting the assumption of a fumigermin cluster; it is thus possible that originally all five genes were functional, but that the genes encoding tailoring enzymes became inactive from mutations, similar to the case of the fgnA gene in strains A1163 and Af293. This Aspergillus fumigatus (strain ATCC MYA-4609 / CBS 101355 / FGSC A1100 / Af293) (Neosartorya fumigata) protein is 2-oxoglutarate-dependent dioxygenase AFUA_1G01000.